Reading from the N-terminus, the 694-residue chain is Methionine--tRNA ligase (694 aa).

The short motif at 12 to 22 is the 'HIGH' region element; it reads PYANGPLHLGH. Zn(2+) contacts are provided by C143, C146, C156, and C159. The 'KMSKS' region motif lies at 330–334; the sequence is KMSKS. K333 is a binding site for ATP. Residues 550–575 are compositionally biased toward low complexity; sequence LAAPAAPATTSKAAPAKPDTKPAAAA. The interval 550–580 is disordered; the sequence is LAAPAAPATTSKAAPAKPDTKPAAAANPQSP. The region spanning 591–694 is the tRNA-binding domain; that stretch reads DFAKLDLRIG…SGAQPGMPVR (104 aa).

This sequence belongs to the class-I aminoacyl-tRNA synthetase family. MetG type 1 subfamily. Homodimer. Zn(2+) is required as a cofactor.

The protein localises to the cytoplasm. The enzyme catalyses tRNA(Met) + L-methionine + ATP = L-methionyl-tRNA(Met) + AMP + diphosphate. Is required not only for elongation of protein synthesis but also for the initiation of all mRNA translation through initiator tRNA(fMet) aminoacylation. The sequence is that of Methionine--tRNA ligase from Xanthomonas oryzae pv. oryzae (strain MAFF 311018).